The chain runs to 261 residues: Enolase-phosphatase E1 (261 aa).

Residues Asp-16 and Glu-18 each coordinate Mg(2+). Substrate contacts are provided by residues 153–154 and Lys-187; that span reads SS. A Mg(2+)-binding site is contributed by Asp-212.

Belongs to the HAD-like hydrolase superfamily. MasA/MtnC family. In terms of assembly, monomer. It depends on Mg(2+) as a cofactor.

Its subcellular location is the cytoplasm. It localises to the nucleus. The enzyme catalyses 5-methylsulfanyl-2,3-dioxopentyl phosphate + H2O = 1,2-dihydroxy-5-(methylsulfanyl)pent-1-en-3-one + phosphate. It functions in the pathway amino-acid biosynthesis; L-methionine biosynthesis via salvage pathway; L-methionine from S-methyl-5-thio-alpha-D-ribose 1-phosphate: step 3/6. It participates in amino-acid biosynthesis; L-methionine biosynthesis via salvage pathway; L-methionine from S-methyl-5-thio-alpha-D-ribose 1-phosphate: step 4/6. In terms of biological role, bifunctional enzyme that catalyzes the enolization of 2,3-diketo-5-methylthiopentyl-1-phosphate (DK-MTP-1-P) into the intermediate 2-hydroxy-3-keto-5-methylthiopentenyl-1-phosphate (HK-MTPenyl-1-P), which is then dephosphorylated to form the acireductone 1,2-dihydroxy-3-keto-5-methylthiopentene (DHK-MTPene). In Homo sapiens (Human), this protein is Enolase-phosphatase E1.